Reading from the N-terminus, the 467-residue chain is UDP-N-acetylmuramate--L-alanine ligase (467 aa).

ATP is bound at residue 114–120 (GTHGKTT).

This sequence belongs to the MurCDEF family.

The protein localises to the cytoplasm. The enzyme catalyses UDP-N-acetyl-alpha-D-muramate + L-alanine + ATP = UDP-N-acetyl-alpha-D-muramoyl-L-alanine + ADP + phosphate + H(+). It functions in the pathway cell wall biogenesis; peptidoglycan biosynthesis. Its function is as follows. Cell wall formation. The polypeptide is UDP-N-acetylmuramate--L-alanine ligase (Nitrobacter hamburgensis (strain DSM 10229 / NCIMB 13809 / X14)).